The chain runs to 304 residues: N-acetylmuramic acid 6-phosphate etherase (304 aa).

In terms of domain architecture, SIS spans 58 to 221; that stretch reads IVDRMKQGGR…TTASMVKMGK (164 aa). The active-site Proton donor is glutamate 86. Glutamate 117 is an active-site residue.

It belongs to the GCKR-like family. MurNAc-6-P etherase subfamily. Homodimer.

It carries out the reaction N-acetyl-D-muramate 6-phosphate + H2O = N-acetyl-D-glucosamine 6-phosphate + (R)-lactate. The protein operates within amino-sugar metabolism; N-acetylmuramate degradation. Its function is as follows. Specifically catalyzes the cleavage of the D-lactyl ether substituent of MurNAc 6-phosphate, producing GlcNAc 6-phosphate and D-lactate. The polypeptide is N-acetylmuramic acid 6-phosphate etherase (Clostridioides difficile (strain 630) (Peptoclostridium difficile)).